We begin with the raw amino-acid sequence, 92 residues long: Bombyxin A-7 (92 aa).

An N-terminal signal peptide occupies residues Met-1–Thr-19. Position 20 is a pyrrolidone carboxylic acid (Gln-20). Intrachain disulfides connect Cys-29/Cys-79, Cys-41/Cys-92, and Cys-78/Cys-83. Residues Ser-50 to Gly-70 constitute a propeptide, c peptide like.

Belongs to the insulin family. As to quaternary structure, heterodimer of a B chain and an A chain linked by two disulfide bonds.

It localises to the secreted. Its function is as follows. Brain peptide responsible for activation of prothoracic glands to produce ecdysone in insects. This Bombyx mori (Silk moth) protein is Bombyxin A-7 (BBXA7).